The chain runs to 248 residues: ATP synthase subunit a, chloroplastic (248 aa).

5 helical membrane passes run 38 to 58, 96 to 116, 135 to 155, 200 to 220, and 221 to 241; these read QVLL…TIAV, VPFI…GALL, INTT…AGLT, LVVA…VMFL, and GLFT…AYIG.

Belongs to the ATPase A chain family. F-type ATPases have 2 components, CF(1) - the catalytic core - and CF(0) - the membrane proton channel. CF(1) has five subunits: alpha(3), beta(3), gamma(1), delta(1), epsilon(1). CF(0) has four main subunits: a, b, b' and c.

The protein localises to the plastid. It localises to the chloroplast thylakoid membrane. Key component of the proton channel; it plays a direct role in the translocation of protons across the membrane. This is ATP synthase subunit a, chloroplastic from Pinus thunbergii (Japanese black pine).